A 412-amino-acid polypeptide reads, in one-letter code: Argininosuccinate synthase (412 aa).

10 to 18 provides a ligand contact to ATP; the sequence is AYSGGLDTS. Tyr-89 contacts L-citrulline. Gly-119 contacts ATP. L-aspartate-binding residues include Thr-121, Asn-125, and Asp-126. Position 125 (Asn-125) interacts with L-citrulline. L-citrulline is bound by residues Arg-129, Ser-177, Glu-261, and Tyr-273.

The protein belongs to the argininosuccinate synthase family. Type 1 subfamily. As to quaternary structure, homotetramer.

The protein resides in the cytoplasm. It catalyses the reaction L-citrulline + L-aspartate + ATP = 2-(N(omega)-L-arginino)succinate + AMP + diphosphate + H(+). It functions in the pathway amino-acid biosynthesis; L-arginine biosynthesis; L-arginine from L-ornithine and carbamoyl phosphate: step 2/3. The polypeptide is Argininosuccinate synthase (Bifidobacterium longum (strain NCC 2705)).